We begin with the raw amino-acid sequence, 170 residues long: tRNA-splicing endonuclease (170 aa).

Active-site residues include tyrosine 106, histidine 116, and lysine 147.

The protein belongs to the tRNA-intron endonuclease family. Archaeal short subfamily. Homotetramer; although the tetramer contains four active sites, only two participate in the cleavage. Therefore, it should be considered as a dimer of dimers.

It catalyses the reaction pretRNA = a 3'-half-tRNA molecule with a 5'-OH end + a 5'-half-tRNA molecule with a 2',3'-cyclic phosphate end + an intron with a 2',3'-cyclic phosphate and a 5'-hydroxyl terminus.. Its function is as follows. Endonuclease that removes tRNA introns. Cleaves pre-tRNA at the 5'- and 3'-splice sites to release the intron. The products are an intron and two tRNA half-molecules bearing 2',3' cyclic phosphate and 5'-OH termini. Recognizes a pseudosymmetric substrate in which 2 bulged loops of 3 bases are separated by a stem of 4 bp. In Methanothermobacter thermautotrophicus (strain ATCC 29096 / DSM 1053 / JCM 10044 / NBRC 100330 / Delta H) (Methanobacterium thermoautotrophicum), this protein is tRNA-splicing endonuclease.